A 426-amino-acid polypeptide reads, in one-letter code: Serine protease HTRA2, mitochondrial (426 aa).

Residues 1 to 30 (MALRGSHRLDDFIRRCSALTLFHSQAPSRR) constitute a mitochondrion transit peptide. The tract at residues 30–59 (RVSHCGRDRRQQQDPPGQGRQEQQESGGGH) is disordered. Positions 31-78 (VSHCGRDRRQQQDPPGQGRQEQQESGGGHWSRFGWRSLIRFFVPFSLG) are excised as a propeptide. Residues 42–54 (QDPPGQGRQEQQE) show a composition bias toward low complexity. Residues 68-86 (LIRFFVPFSLGAVASSLVI) traverse the membrane as a helical segment. The IAP-binding motif lies at 79–82 (AVAS). Positions 143-306 (SNGSGFIIEQ…IPIDYVKVFL (164 aa)) are serine protease. Residues His161, Asp193, and Ser270 each act as charge relay system in the active site. In terms of domain architecture, PDZ spans 329–414 (MGITMLTLTP…HLDIVILRGV (86 aa)).

It belongs to the peptidase S1C family. As to quaternary structure, interacts with th/DIAP1 (via BIR 2 domain).

The protein localises to the mitochondrion intermembrane space. It localises to the mitochondrion membrane. It carries out the reaction Cleavage of non-polar aliphatic amino-acids at the P1 position, with a preference for Val, Ile and Met. At the P2 and P3 positions, Arg is selected most strongly with a secondary preference for other hydrophilic residues.. In terms of biological role, serine protease that shows proteolytic activity against a non-specific substrate beta-casein. Promotes or induces cell death either by direct binding to and inhibition of BIRC proteins (also called inhibitor of apoptosis proteins, IAPs), leading to an increase in caspase activity, or by a BIRC inhibition-independent, caspase-independent and serine protease activity-dependent mechanism. Can antagonize antiapoptotic activity of th/Diap1 by directly inducing the degradation of th/Diap1. The protein is Serine protease HTRA2, mitochondrial of Drosophila ananassae (Fruit fly).